Here is a 413-residue protein sequence, read N- to C-terminus: Aspartate aminotransferase, cytoplasmic (413 aa).

Positions 39, 141, and 195 each coordinate L-aspartate. Lys-259 bears the N6-(pyridoxal phosphate)lysine mark. Residue Arg-387 coordinates L-aspartate.

Belongs to the class-I pyridoxal-phosphate-dependent aminotransferase family. As to quaternary structure, homodimer. Pyridoxal 5'-phosphate serves as cofactor.

Its subcellular location is the cytoplasm. It carries out the reaction L-aspartate + 2-oxoglutarate = oxaloacetate + L-glutamate. It catalyses the reaction L-cysteine + 2-oxoglutarate = 2-oxo-3-sulfanylpropanoate + L-glutamate. The enzyme catalyses (2S)-2-aminobutanoate + 2-oxoglutarate = 2-oxobutanoate + L-glutamate. The catalysed reaction is 3-sulfino-L-alanine + 2-oxoglutarate = 3-sulfinopyruvate + L-glutamate. Functionally, biosynthesis of L-glutamate from L-aspartate or L-cysteine. Important regulator of levels of glutamate, the major excitatory neurotransmitter of the vertebrate central nervous system. Acts as a scavenger of glutamate in brain neuroprotection. The aspartate aminotransferase activity is involved in hepatic glucose synthesis during development and in adipocyte glyceroneogenesis. Using L-cysteine as substrate, regulates levels of mercaptopyruvate, an important source of hydrogen sulfide. Mercaptopyruvate is converted into H(2)S via the action of 3-mercaptopyruvate sulfurtransferase (3MST). Hydrogen sulfide is an important synaptic modulator and neuroprotectant in the brain. This chain is Aspartate aminotransferase, cytoplasmic, found in Sus scrofa (Pig).